The sequence spans 327 residues: Serpentine receptor class gamma-2 (327 aa).

6 helical membrane passes run 35-55, 70-90, 157-177, 181-203, 244-264, and 277-297; these read LVQFVYLLPAAMLHARILYIL, ILFIMSCIACFTLVVQDIFFA, MKYAIALVILTPFLFIWNIII, LPVYTFGGFYIGYERVVIWATMT, IASFLISSCFLGTAAAESLFA, and FLLPISWDILNVGTPIVMVMA.

Belongs to the nematode receptor-like protein srg family.

It localises to the membrane. The polypeptide is Serpentine receptor class gamma-2 (srg-2) (Caenorhabditis elegans).